A 481-amino-acid polypeptide reads, in one-letter code: uncharacterized protein (481 aa).

The protein belongs to the UbiD family.

This is an uncharacterized protein from Archaeoglobus fulgidus (strain ATCC 49558 / DSM 4304 / JCM 9628 / NBRC 100126 / VC-16).